A 210-amino-acid chain; its full sequence is Large ribosomal subunit protein bL25 (210 aa).

Belongs to the bacterial ribosomal protein bL25 family. CTC subfamily. In terms of assembly, part of the 50S ribosomal subunit; part of the 5S rRNA/L5/L18/L25 subcomplex. Contacts the 5S rRNA. Binds to the 5S rRNA independently of L5 and L18.

Its function is as follows. This is one of the proteins that binds to the 5S RNA in the ribosome where it forms part of the central protuberance. This is Large ribosomal subunit protein bL25 from Saccharophagus degradans (strain 2-40 / ATCC 43961 / DSM 17024).